The sequence spans 295 residues: Tyrosine recombinase XerC (295 aa).

One can recognise a Core-binding (CB) domain in the interval 1-85 (MLTALNRYWD…ALRRFLSFLV (85 aa)). Residues 106 to 285 (HLPKNMDGEQ…NFQHLAEVYD (180 aa)) enclose the Tyr recombinase domain. Catalysis depends on residues Arg-145, Lys-169, His-237, Arg-240, and His-263. The O-(3'-phospho-DNA)-tyrosine intermediate role is filled by Tyr-272.

This sequence belongs to the 'phage' integrase family. XerC subfamily. Forms a cyclic heterotetrameric complex composed of two molecules of XerC and two molecules of XerD.

The protein resides in the cytoplasm. Site-specific tyrosine recombinase, which acts by catalyzing the cutting and rejoining of the recombining DNA molecules. The XerC-XerD complex is essential to convert dimers of the bacterial chromosome into monomers to permit their segregation at cell division. It also contributes to the segregational stability of plasmids. The polypeptide is Tyrosine recombinase XerC (Haemophilus influenzae (strain 86-028NP)).